Consider the following 449-residue polypeptide: tRNA-2-methylthio-N(6)-dimethylallyladenosine synthase (449 aa).

The region spanning 7–124 (DAFYIHTFGC…LPLLIKQVQQ (118 aa)) is the MTTase N-terminal domain. [4Fe-4S] cluster is bound by residues C16, C52, C87, C163, C167, and C170. Residues 149–379 (RSSSMSAFVP…IECQNRISAS (231 aa)) form the Radical SAM core domain. Residues 382–445 (SQAVGSVVEV…SATLLGEPLI (64 aa)) enclose the TRAM domain.

The protein belongs to the methylthiotransferase family. MiaB subfamily. Monomer. [4Fe-4S] cluster serves as cofactor.

The protein resides in the cytoplasm. It catalyses the reaction N(6)-dimethylallyladenosine(37) in tRNA + (sulfur carrier)-SH + AH2 + 2 S-adenosyl-L-methionine = 2-methylsulfanyl-N(6)-dimethylallyladenosine(37) in tRNA + (sulfur carrier)-H + 5'-deoxyadenosine + L-methionine + A + S-adenosyl-L-homocysteine + 2 H(+). Its function is as follows. Catalyzes the methylthiolation of N6-(dimethylallyl)adenosine (i(6)A), leading to the formation of 2-methylthio-N6-(dimethylallyl)adenosine (ms(2)i(6)A) at position 37 in tRNAs that read codons beginning with uridine. The sequence is that of tRNA-2-methylthio-N(6)-dimethylallyladenosine synthase from Chlorobium chlorochromatii (strain CaD3).